The sequence spans 144 residues: Universal stress protein F (144 aa).

The protein belongs to the universal stress protein A family. As to quaternary structure, homodimer.

This Salmonella typhi protein is Universal stress protein F (uspF).